The primary structure comprises 81 residues: Bacteriochlorophyll c-binding protein (81 aa).

Residue H25 coordinates a bacteriochlorophyll c.

The protein belongs to the BChl C/E-binding protein family.

It is found in the chlorosome. Its subcellular location is the chlorosome envelope. Its function is as follows. Component of the photosynthetic apparatus. The light harvesting B740 complex binds bacteriochlorophyll c. In Prosthecochloris aestuarii (strain DSM 271 / SK 413), this protein is Bacteriochlorophyll c-binding protein (csmA).